The chain runs to 249 residues: Ubiquinone/menaquinone biosynthesis C-methyltransferase UbiE (249 aa).

Residues T74, D93, and 121–122 contribute to the S-adenosyl-L-methionine site; that span reads DA.

Belongs to the class I-like SAM-binding methyltransferase superfamily. MenG/UbiE family.

It catalyses the reaction a 2-demethylmenaquinol + S-adenosyl-L-methionine = a menaquinol + S-adenosyl-L-homocysteine + H(+). It carries out the reaction a 2-methoxy-6-(all-trans-polyprenyl)benzene-1,4-diol + S-adenosyl-L-methionine = a 5-methoxy-2-methyl-3-(all-trans-polyprenyl)benzene-1,4-diol + S-adenosyl-L-homocysteine + H(+). Its pathway is quinol/quinone metabolism; menaquinone biosynthesis; menaquinol from 1,4-dihydroxy-2-naphthoate: step 2/2. The protein operates within cofactor biosynthesis; ubiquinone biosynthesis. Its function is as follows. Methyltransferase required for the conversion of demethylmenaquinol (DMKH2) to menaquinol (MKH2) and the conversion of 2-polyprenyl-6-methoxy-1,4-benzoquinol (DDMQH2) to 2-polyprenyl-3-methyl-6-methoxy-1,4-benzoquinol (DMQH2). The sequence is that of Ubiquinone/menaquinone biosynthesis C-methyltransferase UbiE from Acidiphilium cryptum (strain JF-5).